Reading from the N-terminus, the 436-residue chain is MISYLKKAEKTPQTETATAQKVVTEMLAEIQARGKDAVRQYAKQLDGWSGDIVLTPDQIREQTKDVPAGVRADIDFAIRQVTDFALAQRESLKEFSVELHPGVTAGQRVLPVNVVGCYAPAGRYAHIASAYMGVATAKAAGVKTVVACSSPFRGQGIHPHVLYAFQAAGADVIMALGGVQAIASMAYGLFTGKPADVVVGPGNKFVAEAKRSLYGQVGIDVFAGPSEVAVIADETADPAIVASDLVGQAEHGHESPAWLFTTSRDLADRVMALVPELIAKLPPTARDAATAAWRDYGEVILCGTREEVVEISDRYASEHLEVHTADLDWWLANLTCYGSLFLGEETTVAFGDKTSGPNHVLPTKGAARYSGGLSVHKFMKTLTWQQMTREATRQIGQVTARISRLEGMEAHARTADDRMAKYFPNASFEMGTPVEV.

Residues Tyr118, Gln180, and Asn203 each contribute to the NAD(+) site. Zn(2+)-binding residues include Gln248 and His251. Active-site proton acceptor residues include Glu318 and His319. Residues Asp352 and His411 each contribute to the Zn(2+) site.

The protein belongs to the histidinol dehydrogenase family. HpsN subfamily. Zn(2+) serves as cofactor.

The catalysed reaction is (2R)-3-sulfopropanediol + 2 NAD(+) + H2O = (2R)-3-sulfolactate + 2 NADH + 3 H(+). Its function is as follows. Catalyzes the NAD-dependent oxidation of (R)-2,3-dihydroxypropane-1-sulfonate to (R)-3-sulfolactate. In Cupriavidus pinatubonensis (strain JMP 134 / LMG 1197) (Cupriavidus necator (strain JMP 134)), this protein is Sulfopropanediol 3-dehydrogenase.